We begin with the raw amino-acid sequence, 546 residues long: T-complex protein 1 subunit epsilon (546 aa).

The protein belongs to the TCP-1 chaperonin family. In terms of assembly, heterooligomeric complex of about 850 to 900 kDa that forms two stacked rings, 12 to 16 nm in diameter.

The protein resides in the cytoplasm. Molecular chaperone; assists the folding of proteins upon ATP hydrolysis. Known to play a role, in vitro, in the folding of actin and tubulin. This chain is T-complex protein 1 subunit epsilon (cct5), found in Schizosaccharomyces pombe (strain 972 / ATCC 24843) (Fission yeast).